The primary structure comprises 327 residues: MDRNEKQALWNAVHGGGAIDEHTAVSVLGASHGELAEILHAAHTMTMRRFGREVSLCSIANVRSGNCSEDCTFCAQSSHFKGTPAPAYPLMSVEEIRDCAEKAGQSPLEFFSYVTSGRALKGKSLDHVCEAVDGMRERSFNHCASLGCLDFESLKKLHESGVVRYHHNLEAAESYFPNVCTTHSYEERVRTVRDAKKAGLEVCCGGLLGLGESHQQRVELALALAELEVDSIPLNFLIPIPGTPLENVEPLQPLEILLTIAMFRLVNPHAEVRMAAGRAALRSLQSFIFHAGCNGLMVGDFLTVSGQGIDHDLTMLEDLGLTVRTKK.

A Radical SAM core domain is found at 49–275 (RFGREVSLCS…VNPHAEVRMA (227 aa)). 3 residues coordinate [4Fe-4S] cluster: C67, C71, and C74. [2Fe-2S] cluster contacts are provided by S112, C143, C203, and R273.

The protein belongs to the radical SAM superfamily. Biotin synthase family. In terms of assembly, homodimer. [4Fe-4S] cluster is required as a cofactor. It depends on [2Fe-2S] cluster as a cofactor.

It catalyses the reaction (4R,5S)-dethiobiotin + (sulfur carrier)-SH + 2 reduced [2Fe-2S]-[ferredoxin] + 2 S-adenosyl-L-methionine = (sulfur carrier)-H + biotin + 2 5'-deoxyadenosine + 2 L-methionine + 2 oxidized [2Fe-2S]-[ferredoxin]. It functions in the pathway cofactor biosynthesis; biotin biosynthesis; biotin from 7,8-diaminononanoate: step 2/2. In terms of biological role, catalyzes the conversion of dethiobiotin (DTB) to biotin by the insertion of a sulfur atom into dethiobiotin via a radical-based mechanism. The polypeptide is Biotin synthase (Maridesulfovibrio salexigens (strain ATCC 14822 / DSM 2638 / NCIMB 8403 / VKM B-1763) (Desulfovibrio salexigens)).